Reading from the N-terminus, the 341-residue chain is tRNA N6-adenosine threonylcarbamoyltransferase (341 aa).

Positions 111 and 115 each coordinate Fe cation. Residues 134–138, D167, G180, and N276 each bind substrate; that span reads LVSGG. D304 serves as a coordination point for Fe cation.

Belongs to the KAE1 / TsaD family. Requires Fe(2+) as cofactor.

It localises to the cytoplasm. It catalyses the reaction L-threonylcarbamoyladenylate + adenosine(37) in tRNA = N(6)-L-threonylcarbamoyladenosine(37) in tRNA + AMP + H(+). Functionally, required for the formation of a threonylcarbamoyl group on adenosine at position 37 (t(6)A37) in tRNAs that read codons beginning with adenine. Is involved in the transfer of the threonylcarbamoyl moiety of threonylcarbamoyl-AMP (TC-AMP) to the N6 group of A37, together with TsaE and TsaB. TsaD likely plays a direct catalytic role in this reaction. This Pseudomonas putida (strain ATCC 47054 / DSM 6125 / CFBP 8728 / NCIMB 11950 / KT2440) protein is tRNA N6-adenosine threonylcarbamoyltransferase.